Here is a 447-residue protein sequence, read N- to C-terminus: Serine/threonine-protein phosphatase 2A 55 kDa regulatory subunit B gamma isoform (447 aa).

7 WD repeats span residues 22–61 (TEADIISTVEFNHTGELLATGDKGGRVVIFQREPESKNAP), 87–128 (EIEE…KRPE), 171–209 (GHTYHINSISVNSDCETYMSADDLRINLWHLAVTDRSFN), 220–260 (DLTE…LCDK), 279–317 (EIISSVSDVKFSHSGRYMLTRDYLTVKVWDLNMEARPIE), 334–375 (ENDC…DVTL), and 410–446 (DFTKKILHTAWHPAENIIAIAATNNLYIFQDKVNSDV).

It belongs to the phosphatase 2A regulatory subunit B family. PP2A consists of a common heterodimeric core enzyme, composed of a 36 kDa catalytic subunit (subunit C) and a 65 kDa constant regulatory subunit (PR65 or subunit A), that associates with a variety of regulatory subunits. Proteins that associate with the core dimer include three families of regulatory subunits B (the R2/B/PR55/B55, R3/B''/PR72/PR130/PR59 and R5/B'/B56 families), the 48 kDa variable regulatory subunit, viral proteins, and cell signaling molecules. Interacts with IER5. As to expression, highly expressed in brain.

The B regulatory subunit might modulate substrate selectivity and catalytic activity, and might also direct the localization of the catalytic enzyme to a particular subcellular compartment. The sequence is that of Serine/threonine-protein phosphatase 2A 55 kDa regulatory subunit B gamma isoform (PPP2R2C) from Oryctolagus cuniculus (Rabbit).